We begin with the raw amino-acid sequence, 61 residues long: Large ribosomal subunit protein uL30 (61 aa).

The protein belongs to the universal ribosomal protein uL30 family. Part of the 50S ribosomal subunit.

The polypeptide is Large ribosomal subunit protein uL30 (Chromohalobacter salexigens (strain ATCC BAA-138 / DSM 3043 / CIP 106854 / NCIMB 13768 / 1H11)).